The following is a 440-amino-acid chain: Putative sodium-coupled neutral amino acid transporter 8 (440 aa).

A run of 11 helical transmembrane segments spans residues 29–49, 58–78, 100–120, 156–176, 183–203, 223–243, 255–275, 300–320, 350–370, 373–393, and 418–438; these read AIFI…PWAF, AIMV…ILGY, IGKL…VAFL, FAIT…KEIS, ILGT…YYVM, MFSV…CVTI, WAAV…FTGI, VIIA…IILL, VVIT…VPDI, VISV…GLCL, and VVCG…EIIA.

The protein belongs to the amino acid/polyamine transporter 2 family.

The protein localises to the membrane. Putative sodium-dependent amino acid/proton antiporter. In Xenopus tropicalis (Western clawed frog), this protein is Putative sodium-coupled neutral amino acid transporter 8 (slc38a8).